Here is a 217-residue protein sequence, read N- to C-terminus: MSSKVSRDTLYEAVREVLHGNQRKRRKFLETVELQISLKNYDPQKDKRFSGTVRLKSTPRPKFSVCVLGDQQHCDERKAVDIPHMDIEALKKLNKNKKLVKKLAKKYDAFLASESLIKQIPRILGPGLNKAGKFPSLLTHNENMVAKVDEVKSTIKFQMKKVLCLAVAVGHVKMTDDELVYNIHLAVNFLVSLLKKNWQNVRALYIKSTMGKPQRLY.

At Ser-2 the chain carries N-acetylserine. Tyr-11 bears the Phosphotyrosine mark. N6-acetyllysine is present on residues Lys-91 and Lys-106. Residue Lys-118 is modified to N6-acetyllysine; alternate. Lys-118 participates in a covalent cross-link: Glycyl lysine isopeptide (Lys-Gly) (interchain with G-Cter in SUMO1); alternate. A Glycyl lysine isopeptide (Lys-Gly) (interchain with G-Cter in SUMO2); alternate cross-link involves residue Lys-118. A Glycyl lysine isopeptide (Lys-Gly) (interchain with G-Cter in SUMO2) cross-link involves residue Lys-161.

It belongs to the universal ribosomal protein uL1 family. As to quaternary structure, component of the large ribosomal subunit.

The protein localises to the cytoplasm. In terms of biological role, component of the large ribosomal subunit. The ribosome is a large ribonucleoprotein complex responsible for the synthesis of proteins in the cell. The protein is Large ribosomal subunit protein uL1 (Rpl10a) of Mus musculus (Mouse).